We begin with the raw amino-acid sequence, 334 residues long: Mevalonate kinase (334 aa).

110–120 (PVGAGLGSSAA) lines the ATP pocket. Catalysis depends on Asp-161, which acts as the Proton acceptor.

Belongs to the GHMP kinase family. Mevalonate kinase subfamily. In terms of assembly, homodimer. Mg(2+) is required as a cofactor.

The protein localises to the cytoplasm. It carries out the reaction (R)-mevalonate + ATP = (R)-5-phosphomevalonate + ADP + H(+). It functions in the pathway isoprenoid biosynthesis; isopentenyl diphosphate biosynthesis via mevalonate pathway; isopentenyl diphosphate from (R)-mevalonate: step 1/3. Its function is as follows. Catalyzes the phosphorylation of (R)-mevalonate (MVA) to (R)-mevalonate 5-phosphate (MVAP). Functions in the mevalonate (MVA) pathway leading to isopentenyl diphosphate (IPP), a key precursor for the biosynthesis of isoprenoid compounds such as archaeal membrane lipids. This is Mevalonate kinase from Thermococcus gammatolerans (strain DSM 15229 / JCM 11827 / EJ3).